The chain runs to 131 residues: Small ribosomal subunit protein uS8 (131 aa).

Belongs to the universal ribosomal protein uS8 family. In terms of assembly, part of the 30S ribosomal subunit. Contacts proteins S5 and S12.

Functionally, one of the primary rRNA binding proteins, it binds directly to 16S rRNA central domain where it helps coordinate assembly of the platform of the 30S subunit. The polypeptide is Small ribosomal subunit protein uS8 (Campylobacter jejuni (strain RM1221)).